Reading from the N-terminus, the 303-residue chain is Succinate--CoA ligase [ADP-forming] subunit alpha (303 aa).

CoA is bound by residues 20–23 (TGSE), Lys46, and 108–110 (ITE). Tyr173 is a substrate binding site. His259 serves as the catalytic Tele-phosphohistidine intermediate.

Belongs to the succinate/malate CoA ligase alpha subunit family. As to quaternary structure, heterotetramer of two alpha and two beta subunits.

The catalysed reaction is succinate + ATP + CoA = succinyl-CoA + ADP + phosphate. It catalyses the reaction GTP + succinate + CoA = succinyl-CoA + GDP + phosphate. Its pathway is carbohydrate metabolism; tricarboxylic acid cycle; succinate from succinyl-CoA (ligase route): step 1/1. Succinyl-CoA synthetase functions in the citric acid cycle (TCA), coupling the hydrolysis of succinyl-CoA to the synthesis of either ATP or GTP and thus represents the only step of substrate-level phosphorylation in the TCA. The alpha subunit of the enzyme binds the substrates coenzyme A and phosphate, while succinate binding and nucleotide specificity is provided by the beta subunit. In Mycobacterium tuberculosis (strain CDC 1551 / Oshkosh), this protein is Succinate--CoA ligase [ADP-forming] subunit alpha.